Reading from the N-terminus, the 146-residue chain is PAFQGVGQRLGTEIESSKDEAATAALKTVELDAVLGGRTPEEETFETRLYQFNGANSNLQERALEVLQYLKVMGDPTVTLETTPGKSAEEFLLDENRPKDVALLDDGRVVEEETMETRLYQFNGANSNLGAERSAEEMLLNENRPK.

It belongs to the villin/gelsolin family. As to quaternary structure, binds to actin. As to expression, expressed in pollen (at protein level).

The protein localises to the cytoplasm. The protein resides in the cytoskeleton. Ca(2+)-dependent actin filament-severing protein that is required for pollen tube growth. Probably regulates the dynamics of the actin cytoskeleton. It can promote the assembly of monomers into filaments (nucleation) as well as sever filaments already formed. This Lilium davidii (David's lily) protein is Villin-like protein ABP41.